The primary structure comprises 278 residues: Deoxyuridine 5'-triphosphate nucleotidohydrolase (278 aa).

Residues 171–173 (RSG) and 273–274 (FG) contribute to the substrate site.

It belongs to the dUTPase family. The cofactor is Mg(2+).

It catalyses the reaction dUTP + H2O = dUMP + diphosphate + H(+). Its function is as follows. Involved in nucleotide metabolism: produces dUMP, the immediate precursor of thymidine nucleotides and decreases the intracellular concentration of dUTP to avoid uracil incorporation into viral DNA. This is Deoxyuridine 5'-triphosphate nucleotidohydrolase from Homo sapiens (Human).